The following is a 410-amino-acid chain: Serine/threonine transporter SstT (410 aa).

Transmembrane regions (helical) follow at residues 11–31 (VSLV…AVTV), 45–65 (FVGA…ISAI), 79–99 (ILIL…VASF), 138–158 (ALLN…GIAL), 179–199 (IVTW…FDAI), 214–234 (LAVL…LIVF), 285–305 (ISIP…ISVL), 327–347 (VLSA…LLLI), and 353–373 (LFGI…IIGV).

This sequence belongs to the dicarboxylate/amino acid:cation symporter (DAACS) (TC 2.A.23) family.

It localises to the cell membrane. The catalysed reaction is L-serine(in) + Na(+)(in) = L-serine(out) + Na(+)(out). It carries out the reaction L-threonine(in) + Na(+)(in) = L-threonine(out) + Na(+)(out). Involved in the import of serine and threonine into the cell, with the concomitant import of sodium (symport system). The chain is Serine/threonine transporter SstT from Geobacillus thermodenitrificans (strain NG80-2).